We begin with the raw amino-acid sequence, 483 residues long: Argininosuccinate lyase (483 aa).

It belongs to the lyase 1 family. Argininosuccinate lyase subfamily.

It localises to the cytoplasm. The enzyme catalyses 2-(N(omega)-L-arginino)succinate = fumarate + L-arginine. It participates in amino-acid biosynthesis; L-arginine biosynthesis; L-arginine from L-ornithine and carbamoyl phosphate: step 3/3. The polypeptide is Argininosuccinate lyase (Albidiferax ferrireducens (strain ATCC BAA-621 / DSM 15236 / T118) (Rhodoferax ferrireducens)).